The sequence spans 342 residues: Endolytic peptidoglycan transglycosylase RlpA (342 aa).

The N-terminal stretch at M1–S26 is a signal peptide. The N-palmitoyl cysteine moiety is linked to residue C27. C27 carries the S-diacylglycerol cysteine lipid modification. The SPOR domain maps to S261–D342.

This sequence belongs to the RlpA family.

Its subcellular location is the cell membrane. Lytic transglycosylase with a strong preference for naked glycan strands that lack stem peptides. In Pseudomonas aeruginosa (strain ATCC 15692 / DSM 22644 / CIP 104116 / JCM 14847 / LMG 12228 / 1C / PRS 101 / PAO1), this protein is Endolytic peptidoglycan transglycosylase RlpA.